A 352-amino-acid polypeptide reads, in one-letter code: Septin-2B (352 aa).

Residues 33–305 (KGFEFTLMVV…ENFRSERLKK (273 aa)) form the Septin-type G domain. Residues 43–50 (GESGLGKS) form a G1 motif region. GTP is bound by residues 43-50 (GESGLGKS), Thr-77, Gly-103, 182-190 (KADTLTLRE), Gly-240, and Arg-255. The segment at 100 to 103 (DTPG) is G3 motif. Residues 181–184 (AKAD) form a G4 motif region. The tract at residues 259 to 269 (WGVVEVENPEH) is important for dimerization.

Belongs to the TRAFAC class TrmE-Era-EngA-EngB-Septin-like GTPase superfamily. Septin GTPase family. In terms of assembly, septins polymerize into heterooligomeric protein complexes that form filaments, and associate with cellular membranes, actin filaments and microtubules. GTPase activity is required for filament formation. Can form heterooligomers with other family members and form filaments. Interacts with wdpcp.

The protein localises to the cytoplasm. The protein resides in the cytoskeleton. It localises to the spindle. Its subcellular location is the cleavage furrow. It is found in the midbody. The protein localises to the cell projection. The protein resides in the cilium membrane. Its function is as follows. Filament-forming cytoskeletal GTPase. Required for normal organization of the actin cytoskeleton. Plays a role in the biogenesis of polarized columnar-shaped epithelium. Required for the progression through mitosis through regulation of chromosome congression. During anaphase, may be required for chromosome segregation and spindle elongation. Probably plays a role in ciliogenesis and collective cell movements including convergent extension during gastrulation. In cilia, required for the integrity of the diffusion barrier at the base of the primary cilium that prevents diffusion of transmembrane proteins between the cilia and plasma membranes. Controls cell shape and not polarization of cells during convergent extension. The protein is Septin-2B (sept2-b) of Xenopus laevis (African clawed frog).